The following is an 84-amino-acid chain: Cell division topological specificity factor (84 aa).

Belongs to the MinE family.

Prevents the cell division inhibition by proteins MinC and MinD at internal division sites while permitting inhibition at polar sites. This ensures cell division at the proper site by restricting the formation of a division septum at the midpoint of the long axis of the cell. The chain is Cell division topological specificity factor from Pseudomonas fluorescens (strain Pf0-1).